The sequence spans 473 residues: Ribulose bisphosphate carboxylase large chain 3 (473 aa).

Substrate contacts are provided by Asn-116 and Thr-166. Lys-168 functions as the Proton acceptor in the catalytic mechanism. Position 170 (Lys-170) interacts with substrate. Residues Lys-194, Asp-196, and Glu-197 each coordinate Mg(2+). Position 194 is an N6-carboxylysine (Lys-194). The active-site Proton acceptor is the His-287. Substrate contacts are provided by Arg-288, His-320, and Ser-372.

The protein belongs to the RuBisCO large chain family. Type I subfamily. Heterohexadecamer of 8 large chains and 8 small chains. Mg(2+) is required as a cofactor.

The enzyme catalyses 2 (2R)-3-phosphoglycerate + 2 H(+) = D-ribulose 1,5-bisphosphate + CO2 + H2O. The catalysed reaction is D-ribulose 1,5-bisphosphate + O2 = 2-phosphoglycolate + (2R)-3-phosphoglycerate + 2 H(+). In terms of biological role, ruBisCO catalyzes two reactions: the carboxylation of D-ribulose 1,5-bisphosphate, the primary event in carbon dioxide fixation, as well as the oxidative fragmentation of the pentose substrate. Both reactions occur simultaneously and in competition at the same active site. This is Ribulose bisphosphate carboxylase large chain 3 from Nitrobacter hamburgensis (strain DSM 10229 / NCIMB 13809 / X14).